The sequence spans 458 residues: MGSAIDFDLDGHLDILGQQPLLQMYTQICFAFPVADSSSYSAITKTLADGLERLSASFPWVAGHIVNEDSGEGNTGVFKIKPLDKSPSLIVKDFRNDPSFPTMEAIKKAGFPFSMLNEDIIAPRKTLPVRSDTPEISPVLVVQADLITGGLLLVFAGQHNAMDMTGQGQVIHLFSKACRNEPFTSDELVSGNLDRRTLVPLLDDSYKQGHELARQISQPRPPPSSDGPPPPKLDWTYILFSPTSLAELKSLAQKTITFPSSFISTDDTLSAFVWQAVARSRLPRFDASAKTTCARAVDVRSYLGVPSTYTGLLQNVTYDTFTLQKLVNEPLGSVASALRSGLDPKRPNDLGFSTRALVTVLSRTLDKNTFSFGGTVNPSLDFMVSSWAKLDSYELDFGLGLGKPEGVRRPQFQPLESLGFLMPKTQDGEIAFALCLMEEDMKRLRADEEFTKYGVFVG.

The interval 211–231 is disordered; it reads ELARQISQPRPPPSSDGPPPP. The span at 219–231 shows a compositional bias: pro residues; the sequence is PRPPPSSDGPPPP.

This sequence belongs to the trichothecene 3-O-acetyltransferase family.

Its pathway is secondary metabolite biosynthesis. Its function is as follows. O-acetyltransferase; part of the gene cluster that mediates the biosynthesis of the dimeric xanthones cryptosporioptides. The pathway begins with the synthesis of atrochrysone thioester by the polyketide synthase dmx-nrPKS. The atrochrysone carboxyl ACP thioesterase dmxR1 then breaks the thioester bond and releases the atrochrysone carboxylic acid from dmx-nrPKS. Atrochrysone carboxylic acid is decarboxylated by the decarboxylase dmxR15, and oxidized by the anthrone oxygenase dmxR16 to yield emodin. Emodin is then reduced to emodin hydroquinone by the oxidoreductase dmxR7. A-ring reduction by the short chain dehydrogenase dmxR18, dehydration by the scytalone dehydratase-like protein dmxR17 and probable spontaneous re-oxidation, results in overall deoxygenation to chrysophanol. Baeyer-Villiger oxidation by the Baeyer-Villiger monooxygenase (BVMO) dmxR6 then yields monodictylactone in equilibrium with monodictyphenone. In the case of the cryptosporioptides biosynthesis, monodictylactone is reduced at C-12 to an alcohol (by the short chain dehydrogenases dmxR12 or dmxR8) and hydroxylated at C-5 by dmxR9, yielding the electron-rich aromatic which could eliminate H(2)O to form the ortho-quinonemethide, followed by tautomerisation to paraquinone and complete the formal reduction to produce the 10-methylgroup. Conjugate addition of C-4a-OH to the resulting paraquinone by the monooxygenase dmxR10 then gives cyclohexadienone, which is then reduced at C-5 by the short chain dehydrogenase dmxR3 to give the dihydroxanthone. The 6,7-epoxide in the cryptosporioptides could be introduced by the cytochrome P450 monooxygenase dmxL3. The highly reducing PKS dmxL2 manufactures butyrate, which is further carboxylated by dmxL1 to form ethylmalonate. It is not yet clear whether the carboxylation occurs while the butyrate is attached to the ACP of dmxL2, but this unusual fungal metabolite could then be esterified to O-5 by the O-acetyltransferase dmxR13. Finally, dimerization performed by dmxR5 gives the observed dimers cryptosporioptides A, B and C as the final products of the pathway. This Cryptosporiopsis sp. (strain 8999) protein is O-acetyltransferase dmxR13.